Here is a 461-residue protein sequence, read N- to C-terminus: GTPase Der (461 aa).

EngA-type G domains follow at residues 2–164 and 197–369; these read QSII…NENF and IKVG…ANFT. Residues 8–15, 55–59, 116–119, 203–210, 250–254, and 314–317 contribute to the GTP site; these read GKPNVGKS, DSGGL, NKID, GRVNVGKS, DTAGI, and NKWD. Positions 370 to 454 constitute a KH-like domain; it reads QKIPTAKLNA…PLIIVSRKKG (85 aa).

This sequence belongs to the TRAFAC class TrmE-Era-EngA-EngB-Septin-like GTPase superfamily. EngA (Der) GTPase family. In terms of assembly, associates with the 50S ribosomal subunit.

Its function is as follows. GTPase that plays an essential role in the late steps of ribosome biogenesis. The sequence is that of GTPase Der from Campylobacter lari (strain RM2100 / D67 / ATCC BAA-1060).